We begin with the raw amino-acid sequence, 474 residues long: GTPase Der (474 aa).

2 EngA-type G domains span residues 2–166 (LRIA…NVPE) and 212–385 (LKIA…ETVS). GTP is bound by residues 8 to 15 (GRPNVGKS), 55 to 59 (DTGGV), 118 to 121 (NKAD), 218 to 225 (GRPNVGKS), 265 to 269 (DTAGL), and 330 to 333 (NKWD). A KH-like domain is found at 386-470 (SKVPTPVVNK…PFDLEFKEKT (85 aa)).

It belongs to the TRAFAC class TrmE-Era-EngA-EngB-Septin-like GTPase superfamily. EngA (Der) GTPase family. Associates with the 50S ribosomal subunit.

In terms of biological role, GTPase that plays an essential role in the late steps of ribosome biogenesis. In Chlamydia caviae (strain ATCC VR-813 / DSM 19441 / 03DC25 / GPIC) (Chlamydophila caviae), this protein is GTPase Der.